A 134-amino-acid polypeptide reads, in one-letter code: ATP synthase epsilon chain, chloroplastic (134 aa).

The protein belongs to the ATPase epsilon chain family. As to quaternary structure, F-type ATPases have 2 components, CF(1) - the catalytic core - and CF(0) - the membrane proton channel. CF(1) has five subunits: alpha(3), beta(3), gamma(1), delta(1), epsilon(1). CF(0) has three main subunits: a, b and c.

The protein localises to the plastid. It localises to the chloroplast thylakoid membrane. In terms of biological role, produces ATP from ADP in the presence of a proton gradient across the membrane. The protein is ATP synthase epsilon chain, chloroplastic of Drimys granadensis.